Consider the following 69-residue polypeptide: Large ribosomal subunit protein uL29 (69 aa).

Belongs to the universal ribosomal protein uL29 family.

The sequence is that of Large ribosomal subunit protein uL29 from Rhodospirillum centenum (strain ATCC 51521 / SW).